The sequence spans 503 residues: MQDHQHVPIDIQTSKLLDWLVDRRHCNLKWQSLVLTIREKINTAIQDMPESQEIAQLLSGSYIHYFHCLRIVDLLKGTEASTKNIFGRYSSQRMKDWQEIVSLYEKDNTYLVELCSLLVRNVSYEIPSLKKQIAKCQQLQQEYSRKEEEGQAGAAEMREQFYHSCKQYGITGDNVRRELLALVKDLPSQLAEIGAGAQSLGEAIDLYQACVEFVCDSPTEQVLPMLRYVQKKGNSTVYEWRTGTEPSVVERPQLEEPPEQVQEDEIDWGDFGVEAVSDSGIVAETPGIDWGISLESEAKDAGADKIDWGDDAAAASEITVLETGTEAPEGVARGSDALTLLEYPETRNQFIDELMELEIFLSQRAVEMSEEADILSVSQFQLAPAILQGQTKEKMLSLVSTLQQLIGRLTSLRMQHLFMILASPRYVDRVTEFLQQKLKQSQLLALKKELMVEKQQEALQEQAALEPKLDLLLEKTRELQKLIEADISKRYSGRPVNLMGTSL.

3 consecutive short sequence motifs (shuffled ATG8-binding motif) follow at residues 266-269, 288-291, and 306-309; these read IDWG. Residues 268 to 503 are required for interaction with UFL1 and mediates interaction with CHEK1; sequence WGDFGVEAVS…RPVNLMGTSL (236 aa). The segment at 352–367 is RPL10a-binding domain (RBD); sequence DELMELEIFLSQRAVE. Lys-447 participates in a covalent cross-link: Glycyl lysine isopeptide (Lys-Gly) (interchain with G-Cter in SUMO2).

Belongs to the CDK5RAP3 family. As to quaternary structure, substrate adapter component of the UFM1 ribosome E3 ligase (UREL) complex, composed of UFL1, DDRGK1 and CDK5RAP3. Interaction with UFL1 anchors CDK5RAP3 in the cytoplasm, preventing its translocation to the nucleus which allows expression of the CCND1 cyclin and progression of cells through the G1/S transition. Interacts with ATG8 family proteins MAP1LC3A, MAP1LC3B, GABARAP, GABARAPL1 and GABARAPL2. Interacts with CDK5R1; competes with CDK5RAP1 and CDK5RAP2. Interacts with RELA. Interacts with CHEK1; may negatively regulate CHEK1 and thereby stimulate entry into mitosis. Interacts with CDKN2A/ARF and MDM2; forms a ternary complex involved in regulation of p53/TP53. Interacts with MAPK14. Interacts with CCNB1. Interacts with TUBG1; may regulate CDK5RAP3 in mitotic G2/M transition checkpoint. May be phosphorylated by CDK5. In terms of processing, ubiquitinated. Probably triggers proteasomal degradation and is negatively regulated by UFL1. Post-translationally, may be ufmylated. Cleaved by caspases early during apoptosis, the resulting peptides may play a role in rupture of the nuclear envelope. Widely expressed with higher expression in secretory tissues.

The protein localises to the endoplasmic reticulum membrane. The protein resides in the cytoplasm. Its subcellular location is the nucleus. It localises to the cytoskeleton. It is found in the microtubule organizing center. The protein localises to the centrosome. Substrate adapter of E3 ligase complexes mediating ufmylation, the covalent attachment of the ubiquitin-like modifier UFM1 to substrate proteins, and which is involved in various processes, such as ribosome recycling and reticulophagy (also called ER-phagy). As part of the UREL complex, plays a key role in ribosome recycling by promoting mono-ufmylation of RPL26/uL24 subunit of the 60S ribosome. Ufmylation of RPL26/uL24 occurs on free 60S ribosomes following ribosome dissociation: it weakens the junction between post-termination 60S subunits and SEC61 translocons, promoting release and recycling of the large ribosomal subunit from the endoplasmic reticulum membrane. Ufmylation of RPL26/uL24 and subsequent 60S ribosome recycling either take place after normal termination of translation or after ribosome stalling during cotranslational translocation at the endoplasmic reticulum. Within the UREL complex, CDK5RAP3 acts as a substrate adapter that constrains UFL1 ligase activity to mono-ufmylate RPL26/uL24 at 'Lys-134'. The UREL complex is also involved in reticulophagy in response to endoplasmic reticulum stress by promoting ufmylation of proteins such as CYB5R3, thereby promoting lysosomal degradation of ufmylated proteins. Also acts as a regulator of transcription: negatively regulates NF-kappa-B-mediated gene transcription through the control of RELA phosphorylation. Also regulates mitotic G2/M transition checkpoint and mitotic G2 DNA damage checkpoint. Through its interaction with CDKN2A/ARF and MDM2 may induce MDM2-dependent p53/TP53 ubiquitination, stabilization and activation in the nucleus, thereby promoting G1 cell cycle arrest and inhibition of cell proliferation. May also play a role in the rupture of the nuclear envelope during apoptosis. May regulate MAPK14 activity by regulating its dephosphorylation by PPM1D/WIP1. Required for liver development. In Mus musculus (Mouse), this protein is CDK5 regulatory subunit-associated protein 3.